Reading from the N-terminus, the 68-residue chain is MKTQVIIFIMAVVFLQLLSQSEAFIFDLLKKLVGKRELRNIDLDQFDDMFDEPEISAADMRFLQELLK.

An N-terminal signal peptide occupies residues 1–23 (MKTQVIIFIMAVVFLQLLSQSEA). Residues 37-68 (ELRNIDLDQFDDMFDEPEISAADMRFLQELLK) constitute a propeptide that is removed on maturation.

This sequence belongs to the non-disulfide-bridged peptide (NDBP) superfamily. Short antimicrobial peptide (group 4) family. In terms of tissue distribution, expressed by the venom gland.

The protein localises to the secreted. The protein resides in the target cell membrane. In terms of biological role, antibacterial peptide with activity against both Gram-positive and Gram-negative bacteria probably by forming pores in the cell membrane. Also has weak hemolytic activity. Does not show antifungal activity. This chain is Non-disulfide-bridged peptide 5.6, found in Hoffmannihadrurus gertschi (Scorpion).